A 468-amino-acid polypeptide reads, in one-letter code: ATP synthase subunit beta (468 aa).

153 to 160 (GGAGVGKT) is a binding site for ATP.

Belongs to the ATPase alpha/beta chains family. As to quaternary structure, F-type ATPases have 2 components, CF(1) - the catalytic core - and CF(0) - the membrane proton channel. CF(1) has five subunits: alpha(3), beta(3), gamma(1), delta(1), epsilon(1). CF(0) has three main subunits: a(1), b(2) and c(9-12). The alpha and beta chains form an alternating ring which encloses part of the gamma chain. CF(1) is attached to CF(0) by a central stalk formed by the gamma and epsilon chains, while a peripheral stalk is formed by the delta and b chains.

It is found in the cell membrane. The catalysed reaction is ATP + H2O + 4 H(+)(in) = ADP + phosphate + 5 H(+)(out). Produces ATP from ADP in the presence of a proton gradient across the membrane. The catalytic sites are hosted primarily by the beta subunits. The sequence is that of ATP synthase subunit beta from Ligilactobacillus salivarius (strain UCC118) (Lactobacillus salivarius).